The following is a 600-amino-acid chain: Elongation factor 4 (600 aa).

Positions 5–187 (KYIRNFSIIA…AIVNKLHPPK (183 aa)) constitute a tr-type G domain. GTP is bound by residues 17 to 22 (DHGKST) and 134 to 137 (NKID).

It belongs to the TRAFAC class translation factor GTPase superfamily. Classic translation factor GTPase family. LepA subfamily.

The protein localises to the cell inner membrane. It catalyses the reaction GTP + H2O = GDP + phosphate + H(+). Required for accurate and efficient protein synthesis under certain stress conditions. May act as a fidelity factor of the translation reaction, by catalyzing a one-codon backward translocation of tRNAs on improperly translocated ribosomes. Back-translocation proceeds from a post-translocation (POST) complex to a pre-translocation (PRE) complex, thus giving elongation factor G a second chance to translocate the tRNAs correctly. Binds to ribosomes in a GTP-dependent manner. This is Elongation factor 4 from Rickettsia akari (strain Hartford).